The sequence spans 181 residues: Transmembrane protein 154 (181 aa).

The first 22 residues, 1–22, serve as a signal peptide directing secretion; sequence MTVPCAALVLALGLAFGQSSQG. Residues 19 to 47 form a disordered region; sequence SSQGNDEESEYSGQSITEEENSEDETTRS. The Extracellular segment spans residues 23–74; the sequence is NDEESEYSGQSITEEENSEDETTRSALATVTTEALAENVNSTHTNDTSNQVE. Residues 75–95 traverse the membrane as a helical segment; sequence FILMVAIPLAALLILLFMVLI. The Cytoplasmic segment spans residues 96–181; sequence ATYFKSKRPK…PNPSPSDNES (86 aa). The tract at residues 103–122 is disordered; that stretch reads RPKQEPSSQGSQSALQTHEL. Positions 107 to 118 are enriched in polar residues; the sequence is EPSSQGSQSALQ. Tyr160 is subject to Phosphotyrosine. A disordered region spans residues 161–181; that stretch reads ECLPTLKEEKEPNPSPSDNES. Ser177 is modified (phosphoserine).

Its subcellular location is the membrane. This Mus musculus (Mouse) protein is Transmembrane protein 154 (Tmem154).